The primary structure comprises 463 residues: T-box transcription factor TBX1 (463 aa).

Disordered regions lie at residues Ser-39–Ala-58 and Gly-75–Lys-103. Residues Gly-75–Ser-97 show a composition bias toward low complexity. The T-box DNA-binding region spans Leu-119–Asp-297. Disordered regions lie at residues Arg-320–Gly-354 and Ser-367–His-405. Positions Asn-323–Gly-332 are enriched in polar residues. Residues Ser-333–Thr-347 are compositionally biased toward basic and acidic residues. The segment covering Ser-367 to Ser-380 has biased composition (low complexity). Positions Lys-420–Ile-431 match the Nuclear localization signal motif.

In terms of assembly, binds DNA as a dimer. Interacts with dscr6/ripply3.

The protein resides in the nucleus. Probable transcriptional regulator involved in developmental processes. Binds to the palindromic T site 5'-TTCACACCTAGGTGTGAA-3' DNA sequence. Induces pre-placodal ectoderm (PPE) gene expression in regions where RIPPLY3 is absent. Plays a role in the formation of the anteroposterior (AP) axis during embryonic development; required to establish the posterolateral border of the pre-placodal ectoderm (PPE) acting downstream of the retinoic acid receptor (RAR) signaling. The chain is T-box transcription factor TBX1 (tbx1) from Xenopus tropicalis (Western clawed frog).